The chain runs to 383 residues: Glutaminyl-peptide cyclotransferase-like protein (383 aa).

A helical membrane pass occupies residues 33-53 (VQFLPLLLLALAMGLAFYIVW). Residues Cys-168 and Cys-192 are joined by a disulfide bond. Zn(2+) is bound at residue Asp-187. Catalysis depends on Glu-226, which acts as the Proton acceptor. Residue Glu-227 coordinates Zn(2+). Asp-270 acts as the Proton acceptor in catalysis. His-352 contributes to the Zn(2+) binding site.

Belongs to the glutaminyl-peptide cyclotransferase family. As to expression, detected in thalamus, hippocampus, brain cortex, cerebellum, kidney, lung and liver, and at low levels in heart and spleen.

It localises to the golgi apparatus membrane. It catalyses the reaction N-terminal L-glutaminyl-[peptide] = N-terminal 5-oxo-L-prolyl-[peptide] + NH4(+). In terms of biological role, responsible for the biosynthesis of pyroglutamyl peptides. In Mus musculus (Mouse), this protein is Glutaminyl-peptide cyclotransferase-like protein (Qpctl).